We begin with the raw amino-acid sequence, 442 residues long: UDP-N-acetylmuramate--L-alanine ligase (442 aa).

Residue 109–115 participates in ATP binding; sequence GAHGKTS.

It belongs to the MurCDEF family.

It is found in the cytoplasm. The enzyme catalyses UDP-N-acetyl-alpha-D-muramate + L-alanine + ATP = UDP-N-acetyl-alpha-D-muramoyl-L-alanine + ADP + phosphate + H(+). It functions in the pathway cell wall biogenesis; peptidoglycan biosynthesis. Cell wall formation. In Streptococcus pyogenes serotype M2 (strain MGAS10270), this protein is UDP-N-acetylmuramate--L-alanine ligase.